The following is a 634-amino-acid chain: Ankyrin repeat and SOCS box protein 2 (634 aa).

The region spanning 26–45 (SEEELVQMAIEQSLADKTRG) is the UIM domain. The segment at 35–81 (IEQSLADKTRGPTPAETSVSSQTNHQPGHIHPWTRSSSPPESPPARA) is disordered. A compositionally biased stretch (polar residues) spans 49–60 (AETSVSSQTNHQ). ANK repeat units follow at residues 104-133 (AAMDPVLKAIKEGDEEALKAMIQDGKNLAE), 137-167 (EGWLPLHEAAYYGKLGCLKVLQRAYPGTIDQ), 171-200 (QEETALYLATCREHLDCLLSLLQAGAEPDI), 204-233 (SRETPLYKACERKNAEAVRILVQYNADANH), 237-266 (RGWTALHESVSRNDLEVMEILVSGGAKVEA), 270-299 (YSITPLFVAAQSGQLEALRFLAKHGADINT), 303-332 (DSASALYEACKNEHEDVVEFLLSQGADANK), 336-365 (DGLLPLHVASKKGNYRIVQMLLPVTSRTRV), 368-397 (SGISPLHLAAERNHDAVLEALLAARFDVNT), 410-439 (RRTSALYFAVVNNNVYATELLLLAGADPNR), 440-469 (DVISPLLVAIRHGCLRTMQLLLDHGANIDA), and 476-504 (TAFPATIMFAMKCLSLLKFLMDLGCDGEP). Ser-371 is modified (phosphoserine). Residues 580 to 634 (EDWAVIKEKAEPPRPLAHLCRLRVRKAIGKYRIKLLDTLPLPGRLIRYLKYENTQ) enclose the SOCS box domain.

Belongs to the ankyrin SOCS box (ASB) family. As to quaternary structure, component of a probable ECS E3 ubiquitin-protein ligase complex which contains CUL5, either RBX1 or RNF7/RBX2, Elongin BC complex (ELOB and ELOC) and ASB2. Interacts with SKP2. Through its interaction with SKP2, likely to bridge the formation of dimeric E3-ubiquitin-protein ligase complexes composed of an ECS complex and an SCF(SKP2) complex. Interacts with JAK2; the interaction targets JAK2 for Notch-mediated proteasomal degradation. Interacts with TCF3/E2A; the interaction is mediated by SKP2 and targets TCF3 for Notch-mediated proteasomal degradation. Interacts with DES. In terms of processing, monoubiquitinated.

It localises to the cytoplasm. The protein localises to the cytoskeleton. It is found in the stress fiber. The protein resides in the myofibril. Its subcellular location is the sarcomere. It localises to the z line. The protein operates within protein modification; protein ubiquitination. Functionally, substrate-recognition component of a SCF-like ECS (Elongin-Cullin-SOCS-box protein) E3 ubiquitin-protein ligase complex which mediates the ubiquitination and subsequent proteasomal degradation of target proteins. Mediates Notch-induced ubiquitination and degradation of substrates including E2A and JAK2. Required during embryonic heart development for complete heart looping. Required for cardiomyocyte differentiation. Involved in myogenic differentiation and targets filamin FLNB for proteasomal degradation but not filamin FLNA. Also targets DES for proteasomal degradation. Acts as a negative regulator of skeletal muscle mass. This chain is Ankyrin repeat and SOCS box protein 2, found in Rattus norvegicus (Rat).